The sequence spans 137 residues: uncharacterized protein (137 aa).

This is an uncharacterized protein from Frog virus 3 (isolate Goorha) (FV-3).